Consider the following 134-residue polypeptide: UPF0412 protein YaaI (134 aa).

Positions Met-1–Ala-23 are cleaved as a signal peptide.

The protein belongs to the UPF0412 family.

The chain is UPF0412 protein YaaI from Salmonella paratyphi B (strain ATCC BAA-1250 / SPB7).